The sequence spans 257 residues: Major prion protein (257 aa).

The N-terminal stretch at 1–24 is a signal peptide; it reads MVKSHIGSWLLVLFVATWSDIGFC. The tract at residues 25 to 41 is interaction with ADGRG6; the sequence is KKRPKPGGGWNTGGSRY. The segment at 25–234 is interaction with GRB2, ERI3 and SYN1; the sequence is KKRPKPGGGW…ESEAYYQRGA (210 aa). The segment at 27–114 is disordered; that stretch reads RPKPGGGWNT…KPSKPKTNMK (88 aa). Tandem repeats lie at residues 54 to 62, 63 to 70, 71 to 78, 79 to 86, and 87 to 95. The tract at residues 54–95 is 5 X 8 AA tandem repeats of P-H-G-G-G-W-G-Q; sequence PQGGGGWGQPHGGGWGQPHGGGWGQPHGGGWGQPHGGGGWGQ. A compositionally biased stretch (gly residues) spans 55–101; that stretch reads QGGGGWGQPHGGGWGQPHGGGWGQPHGGGWGQPHGGGGWGQGGGSHG. Residues His64, Gly65, Gly66, His72, Gly73, Gly74, His80, Gly81, Gly82, His88, Gly90, and Gly91 each contribute to the Cu(2+) site. Cys183 and Cys218 are joined by a disulfide. N-linked (GlcNAc...) asparagine glycosylation is found at Asn185 and Asn201. Ala234 is lipidated: GPI-anchor amidated alanine. A propeptide spans 235–257 (removed in mature form); it reads SAILFSPPPVILLISLLILLIVG.

It belongs to the prion family. In terms of assembly, monomer and homodimer. Has a tendency to aggregate into amyloid fibrils containing a cross-beta spine, formed by a steric zipper of superposed beta-strands. Soluble oligomers may represent an intermediate stage on the path to fibril formation. Copper binding may promote oligomerization. Interacts with GRB2, APP, ERI3/PRNPIP and SYN1. Mislocalized cytosolically exposed PrP interacts with MGRN1; this interaction alters MGRN1 subcellular location and causes lysosomal enlargement. Interacts with APP. Interacts with KIAA1191. Interacts with ADGRG6.

Its subcellular location is the cell membrane. The protein resides in the golgi apparatus. Its primary physiological function is unclear. May play a role in neuronal development and synaptic plasticity. May be required for neuronal myelin sheath maintenance. May promote myelin homeostasis through acting as an agonist for ADGRG6 receptor. May play a role in iron uptake and iron homeostasis. Soluble oligomers are toxic to cultured neuroblastoma cells and induce apoptosis (in vitro). Association with GPC1 (via its heparan sulfate chains) targets PRNP to lipid rafts. Also provides Cu(2+) or Zn(2+) for the ascorbate-mediated GPC1 deaminase degradation of its heparan sulfate side chains. The sequence is that of Major prion protein (PRNP) from Neovison vison (American mink).